The sequence spans 360 residues: 3-dehydroquinate synthase (360 aa).

Residues 71–76 (DGEQYK), 105–109 (GVVGD), 129–130 (TT), K142, K151, and 169–172 (TLNT) each bind NAD(+). E184, H248, and H265 together coordinate Zn(2+).

This sequence belongs to the sugar phosphate cyclases superfamily. Dehydroquinate synthase family. Co(2+) is required as a cofactor. The cofactor is Zn(2+). Requires NAD(+) as cofactor.

The protein localises to the cytoplasm. It catalyses the reaction 7-phospho-2-dehydro-3-deoxy-D-arabino-heptonate = 3-dehydroquinate + phosphate. It functions in the pathway metabolic intermediate biosynthesis; chorismate biosynthesis; chorismate from D-erythrose 4-phosphate and phosphoenolpyruvate: step 2/7. Its function is as follows. Catalyzes the conversion of 3-deoxy-D-arabino-heptulosonate 7-phosphate (DAHP) to dehydroquinate (DHQ). This is 3-dehydroquinate synthase from Coxiella burnetii (strain CbuG_Q212) (Coxiella burnetii (strain Q212)).